The sequence spans 146 residues: Large ribosomal subunit protein uL15 (146 aa).

The disordered stretch occupies residues 18 to 45 (VLGRGLGCGKGKTSGRGHKGQKARSGCA). Over residues 30 to 39 (TSGRGHKGQK) the composition is skewed to basic residues.

The protein belongs to the universal ribosomal protein uL15 family. Part of the 50S ribosomal subunit.

Functionally, binds to the 23S rRNA. The chain is Large ribosomal subunit protein uL15 from Anaplasma marginale (strain St. Maries).